The sequence spans 335 residues: Mitochondrial thiamine diphosphate carrier 1 (335 aa).

6 consecutive transmembrane segments (helical) span residues 13–29 (KRAV…GAIS), 88–105 (VPAL…FAVL), 127–150 (YLSY…FDLL), 182–199 (LYAG…YAGL), 231–247 (SLSS…SGTV), and 304–323 (GIVP…FVAY). 3 Solcar repeats span residues 13-111 (KRAV…VKSF), 124-210 (LSPY…FKRW), and 232-329 (LSSF…ASDW).

This sequence belongs to the mitochondrial carrier (TC 2.A.29) family.

The protein resides in the mitochondrion inner membrane. In terms of biological role, mitochondrial transporter that mediates uptake of thiamine diphosphate (ThDP) into mitochondria. This Arabidopsis thaliana (Mouse-ear cress) protein is Mitochondrial thiamine diphosphate carrier 1.